The primary structure comprises 344 residues: MMNHTTSEYYDYEYDHEHYSDLPDVPVDCPAGTCFTSDVYLIVLLVLYAAVFLVGVPGNTLVAWVTWKESRHRLGASWFLHLTMADLLCCVSLPFLAVPIAQKGHWPYGAAGCWLLSSITILSMYASVLLLTGLSGDLFLLAFRPSWKGADHRTFGVRVVQASSWMLGLLLTVPSAVYRRLLQEHYPPRLVCGIDYGGSVSAEVAITTVRFLFGFLGPLVFMAGCHGILQRQMARRHWPLGTAVVVGFFICWTPYHVLRVIIAAAPPHSLLLARVLEAEPLFNGLALAHSALNPIMFLYFGRKQLCKSLQAACHWALRDPQDEESAVTKVSISTSHEMVSEMPV.

Residues 1–44 are Extracellular-facing; the sequence is MMNHTTSEYYDYEYDHEHYSDLPDVPVDCPAGTCFTSDVYLIVL. Residue N3 is glycosylated (N-linked (GlcNAc...) asparagine). The chain crosses the membrane as a helical span at residues 45 to 67; the sequence is LVLYAAVFLVGVPGNTLVAWVTW. Residues 68 to 78 lie on the Cytoplasmic side of the membrane; it reads KESRHRLGASW. A helical membrane pass occupies residues 79–101; that stretch reads FLHLTMADLLCCVSLPFLAVPIA. Over 102–120 the chain is Extracellular; sequence QKGHWPYGAAGCWLLSSIT. C113 and C192 form a disulfide bridge. A helical transmembrane segment spans residues 121-143; it reads ILSMYASVLLLTGLSGDLFLLAF. Over 144–155 the chain is Cytoplasmic; sequence RPSWKGADHRTF. The chain crosses the membrane as a helical span at residues 156 to 178; it reads GVRVVQASSWMLGLLLTVPSAVY. Over 179–208 the chain is Extracellular; the sequence is RRLLQEHYPPRLVCGIDYGGSVSAEVAITT. A helical transmembrane segment spans residues 209–231; that stretch reads VRFLFGFLGPLVFMAGCHGILQR. Topologically, residues 232 to 243 are cytoplasmic; that stretch reads QMARRHWPLGTA. The chain crosses the membrane as a helical span at residues 244-266; that stretch reads VVVGFFICWTPYHVLRVIIAAAP. The Extracellular segment spans residues 267 to 280; that stretch reads PHSLLLARVLEAEP. Residues 281–300 traverse the membrane as a helical segment; it reads LFNGLALAHSALNPIMFLYF. Residues 301 to 344 are Cytoplasmic-facing; sequence GRKQLCKSLQAACHWALRDPQDEESAVTKVSISTSHEMVSEMPV. The residue at position 325 (S325) is a Phosphoserine.

Belongs to the G-protein coupled receptor 1 family. As to quaternary structure, interacts with C3 (the anaphylatoxin peptide C3a and the adipogenic hormone ASP); the interaction occurs with higher affinity for ASP, enhancing the phosphorylation and activation of GPR77, recruitment of ARRB2 to the cell surface and endocytosis of GRP77. In terms of tissue distribution, highly expressed in liver and spleen. Lower levels in intestine, brain and kidney. Also expressed in adipose tissues with highest levels in gonadal and ingual fat depots. Lower levels in brown tissue.

It is found in the cell membrane. Its function is as follows. Receptor for the chemotactic and inflammatory C3a, C4a and C5a anaphylatoxin peptides and also for their dearginated forms ASP/C3adesArg, C4adesArg and C5adesArg respectively. Couples weakly to G(i)-mediated signaling pathways. The polypeptide is C5a anaphylatoxin chemotactic receptor 2 (C5ar2) (Mus musculus (Mouse)).